The sequence spans 274 residues: D-aminopeptidase (274 aa).

4 residues coordinate Zn(2+): Asp-8, Glu-10, His-60, and His-104. Residue His-115 is the Nucleophile of the active site. A Zn(2+)-binding site is contributed by Glu-133.

The protein belongs to the peptidase M55 family. In terms of assembly, homodecamer. A 20 Angstroms wide channel runs through the complex, giving access to a central chamber holding the active sites. Zn(2+) is required as a cofactor.

Functionally, hydrolyzes N-terminal residues in D-amino acid containing peptides. Among the tested substrates, the highest activities are with D-Ala-D-Ala and D-Ala-Gly-Gly. The physiological role is not clear. This Bacillus subtilis (strain 168) protein is D-aminopeptidase (dppA).